The primary structure comprises 456 residues: F-box/FBD/LRR-repeat protein At1g13780 (456 aa).

One can recognise an F-box domain in the interval 9–55 (FDRISELPESLISQILLHLPTKASVKTSVLSTRWKNLWLNVPGLDLN). LRR repeat units follow at residues 197 to 220 (LEEL…SLKR), 243 to 266 (APGL…NLTS), 302 to 325 (ISSV…SKVG), and 355 to 379 (FPNL…ELVN). The FBD domain maps to 372–424 (MEKFELVNVPRCFVSTLEHVEIKGLFDWGEQDMKIASYFLENSAVLKKLILSF).

This Arabidopsis thaliana (Mouse-ear cress) protein is F-box/FBD/LRR-repeat protein At1g13780.